Consider the following 297-residue polypeptide: N-acetylneuraminate lyase (297 aa).

Serine 47 and threonine 48 together coordinate aceneuramate. Tyrosine 137 serves as the catalytic Proton donor. The Schiff-base intermediate with substrate role is filled by lysine 165. Threonine 167, glycine 189, aspartate 191, glutamate 192, and serine 208 together coordinate aceneuramate.

It belongs to the DapA family. NanA subfamily. Homotetramer.

Its subcellular location is the cytoplasm. It carries out the reaction aceneuramate = aldehydo-N-acetyl-D-mannosamine + pyruvate. The protein operates within amino-sugar metabolism; N-acetylneuraminate degradation; D-fructose 6-phosphate from N-acetylneuraminate: step 1/5. Functionally, catalyzes the reversible aldol cleavage of N-acetylneuraminic acid (sialic acid; Neu5Ac) to form pyruvate and N-acetylmannosamine (ManNAc) via a Schiff base intermediate. The protein is N-acetylneuraminate lyase of Escherichia fergusonii (strain ATCC 35469 / DSM 13698 / CCUG 18766 / IAM 14443 / JCM 21226 / LMG 7866 / NBRC 102419 / NCTC 12128 / CDC 0568-73).